We begin with the raw amino-acid sequence, 336 residues long: tRNA pseudouridine synthase D (336 aa).

Asp84 functions as the Nucleophile in the catalytic mechanism. The TRUD domain maps to 164-298 (GVPNYFGEQR…TPSYRWLVGD (135 aa)).

Belongs to the pseudouridine synthase TruD family.

The enzyme catalyses uridine(13) in tRNA = pseudouridine(13) in tRNA. Responsible for synthesis of pseudouridine from uracil-13 in transfer RNAs. The sequence is that of tRNA pseudouridine synthase D from Cellvibrio japonicus (strain Ueda107) (Pseudomonas fluorescens subsp. cellulosa).